A 220-amino-acid polypeptide reads, in one-letter code: Probable GTP-binding protein EngB (220 aa).

In terms of domain architecture, EngB-type G spans 23-199 (SVREVAFAGR…ERVLASWLDI (177 aa)). Mg(2+)-binding residues include S38 and T60.

It belongs to the TRAFAC class TrmE-Era-EngA-EngB-Septin-like GTPase superfamily. EngB GTPase family. Requires Mg(2+) as cofactor.

Necessary for normal cell division and for the maintenance of normal septation. The sequence is that of Probable GTP-binding protein EngB from Dechloromonas aromatica (strain RCB).